The primary structure comprises 1390 residues: MVVLRSSLELHNHSAASATGSLDLSSDFLSLEHIGRRRLRSAGAAQKKPAATTAKAGDGSSVKEVETYHRTRALRSLRKDAQNSSDSSFEKNVEITEQLANGRHFTRQLARQQADKKKEEHREDKVIPVTRSLRARNIVQSTEHLHEDNGDVEVRRSCRIRSRYSGVNQSMLFDKLITNTAEAVLQKMDDMKKMRRQRMRELEDLGVFNETEESNLNMYTRGKQKDIQRTDEETTDNQEGSVESSEEGEDQEHEDDGEDEDDEDDDDDDDDDDDDDDEDDEDEEDGEEENQKRYYLRQRKATVYYQAPLEKPRHQRKPNIFYSGPASPARPRYRLSSAGPRSPYCKRMNRRRHAIHSSDSTSSSSSEDEQHFERRRKRSRNRAINRCLPLNFRKDELKGIYKDRMKIGASLADVDPMQLDSSVRFDSVGGLSNHIAALKEMVVFPLLYPEVFEKFKIQPPRGCLFYGPPGTGKTLVARALANECSQGDKRVAFFMRKGADCLSKWVGESERQLRLLFDQAYQMRPSIIFFDEIDGLAPVRSSRQDQIHSSIVSTLLALMDGLDSRGEIVVIGATNRLDSIDPALRRPGRFDREFLFSLPDKEARKEILKIHTRDWNPKPLDTFLEELAENCVGYCGADIKSICAEAALCALRRRYPQIYTTSEKLQLDLSSINISAKDFEVAMQKMIPASQRAVTSPGQALSTVVKPLLQNTVDKILEALQRVFPHAEFRTNKTLDSDISCPLLESDLAYSDDDVPSVYENGLSQKSSHKAKDNFNFLHLNRNACYQPMSFRPRILIVGEPGFGQGSHLAPAVIHALEKFTVYTLDIPVLFGVSTTSPEETCAQVIREAKRTAPSIVYVPHIHVWWEIVGPTLKATFTTLLQNIPSFAPVLLLATSDKPHSALPEEVQELFIRDYGEIFNVQLPDKEERTKFFEDLILKQAAKPPISKKKAVLQALEVLPVAPPPEPRSLTAEEVKRLEEQEEDTFRELRIFLRNVTHRLAIDKRFRVFTKPVDPDEVPDYVTVIKQPMDLSSVISKIDLHKYLTVKDYLRDIDLICSNALEYNPDRDPGDRLIRHRACALRDTAYAIIKEELDEDFEQLCEEIQESRKKRGCSSSKYAPSYYHVMPKQNSTLVGDKRSDPEQNEKLKTPSTPVACSTPAQLKRKIRKKSNWYLGTIKKRRKISQAKDDSQNAIDHKIESDTEETQDTSVDHNETGNTGESSVEENEKQQNASESKLELRNNSNTCNIENELEDSRKTTACTELRDKIACNGDASSSQIIHISDENEGKEMCVLRMTRARRSQVEQQQLITVEKALAILSQPTPSLVVDHERLKNLLKTVVKKSQNYNIFQLENLYAVISQCIYRHRKDHDKTSLIQKMEQEVENFSCSR.

Residues 40-63 (RSAGAAQKKPAATTAKAGDGSSVK) are disordered. Low complexity predominate over residues 42–57 (AGAAQKKPAATTAKAG). Ser60 and Ser61 each carry phosphoserine. Lys125 participates in a covalent cross-link: Glycyl lysine isopeptide (Lys-Gly) (interchain with G-Cter in SUMO2). 2 positions are modified to phosphoserine: Ser165 and Ser170. A disordered region spans residues 216 to 380 (LNMYTRGKQK…HFERRRKRSR (165 aa)). Basic and acidic residues predominate over residues 223–232 (KQKDIQRTDE). Residues 244-288 (SSEEGEDQEHEDDGEDEDDEDDDDDDDDDDDDDDEDDEDEEDGEE) show a composition bias toward acidic residues. Lys317 participates in a covalent cross-link: Glycyl lysine isopeptide (Lys-Gly) (interchain with G-Cter in SUMO2). Phosphoserine is present on residues Ser327, Ser337, Ser342, and Ser410. 467 to 474 (GPPGTGKT) is a binding site for ATP. Phosphoserine is present on residues Ser746 and Ser751. 2 coiled-coil regions span residues 970 to 994 (LTAE…IFLR) and 1086 to 1112 (YAII…KKRG). In terms of domain architecture, Bromo spans 980–1092 (EQEEDTFREL…DTAYAIIKEE (113 aa)). A disordered region spans residues 1124–1163 (HVMPKQNSTLVGDKRSDPEQNEKLKTPSTPVACSTPAQLK). Lys1128 participates in a covalent cross-link: Glycyl lysine isopeptide (Lys-Gly) (interchain with G-Cter in SUMO2). A compositionally biased stretch (basic and acidic residues) spans 1135 to 1148 (GDKRSDPEQNEKLK). At Ser1139 the chain carries Phosphoserine. Lys1148 is covalently cross-linked (Glycyl lysine isopeptide (Lys-Gly) (interchain with G-Cter in SUMO2)). Phosphothreonine occurs at positions 1149, 1152, and 1176. Residues 1149-1160 (TPSTPVACSTPA) are compositionally biased toward polar residues. The disordered stretch occupies residues 1181–1242 (RKISQAKDDS…SESKLELRNN (62 aa)). The segment covering 1185 to 1200 (QAKDDSQNAIDHKIES) has biased composition (basic and acidic residues). Residues Ser1200, Ser1233, and Ser1235 each carry the phosphoserine modification. Residues 1229 to 1242 (QQNASESKLELRNN) are compositionally biased toward polar residues. Residue Lys1236 forms a Glycyl lysine isopeptide (Lys-Gly) (interchain with G-Cter in SUMO2) linkage. Ser1243 and Ser1302 each carry phosphoserine. Thr1323 bears the Phosphothreonine mark.

It belongs to the AAA ATPase family. In terms of assembly, interacts with ESR1 and NCOA3 and these interactions are enhanced by estradiol. Interacts with acetylated lysine residues on histone H1.4, H2A, H2B and H3 (in vitro). In terms of tissue distribution, highly expressed in estrogen receptor positive breast tumors and in osteosarcoma tumors.

It is found in the nucleus. It catalyses the reaction ATP + H2O = ADP + phosphate + H(+). Functionally, may be a transcriptional coactivator of the nuclear receptor ESR1 required to induce the expression of a subset of estradiol target genes, such as CCND1, MYC and E2F1. May play a role in the recruitment or occupancy of CREBBP at some ESR1 target gene promoters. May be required for histone hyperacetylation. Involved in the estrogen-induced cell proliferation and cell cycle progression of breast cancer cells. This is ATPase family AAA domain-containing protein 2 (ATAD2) from Homo sapiens (Human).